Reading from the N-terminus, the 277-residue chain is Ubiquitin-conjugating enzyme suppressor 1 (277 aa).

The segment at 254-277 (RTLACPDETNDNRGSEHYTKRKKI) is disordered.

Functionally, not known; its elevated expression suppresses the conditional cell cycle defects associated with UBC3/CDC34 mutations. This chain is Ubiquitin-conjugating enzyme suppressor 1 (UBS1), found in Saccharomyces cerevisiae (strain ATCC 204508 / S288c) (Baker's yeast).